We begin with the raw amino-acid sequence, 395 residues long: Leucine aminopeptidase 1 (395 aa).

The signal sequence occupies residues 1–19; it reads MKHLSLLALAAVAPTTALA. The propeptide occupies 20–95; the sequence is GVIDHQQVTF…SVKSFEQTKV (76 aa). Asn187 carries N-linked (GlcNAc...) asparagine glycosylation. Zn(2+)-binding residues include His195, Asp214, Glu253, and Asp280. A disulfide bond links Cys329 and Cys333. Residue His362 coordinates Zn(2+).

The protein belongs to the peptidase M28 family. M28E subfamily. In terms of assembly, monomer. Zn(2+) serves as cofactor.

The protein localises to the secreted. Its function is as follows. Extracellular aminopeptidase that allows assimilation of proteinaceous substrates. This chain is Leucine aminopeptidase 1 (LAP1), found in Uncinocarpus reesii (strain UAMH 1704).